Consider the following 942-residue polypeptide: MDAGASYMRLTGEENWVEVTMDEEKERKGKDVQQGKYRPQVSKPIINRDTNTSFAYKGIFLWGIQITMWILLWTNMCVRAEDYITLISDPYGFSPIKNVSGVPVTCVTKEFARWGCQPLGAYPDPEIEYRNVSQEIVKEVYQENWPWNTYHWPLWQMENVRYWLKENIAENKKRKNSTKKGIEELLAGTIRGRFCVPYPFALLKCTKWCWYPAEIDQETGRARKIKINCTEARAVSCTEEMPLASIHRAYWDEKDRESMAFMNIRACDSNLRCQKRPGGCVEGYPIPVGANIIPENMKYLRGQKSQYGGIKDKNGELKLPLTVRVWVKLANVSTWVNGTPPYWQNRINGSKGINGTLWGQLSGMHHLGFNLSQTGKWCNYTGKIKIGQETFSYHYKPNWNCTGNWTQHPVWQVMRDLDMVEHMTGECVQRPQRHNITVDRNQTITGNCSVTNWDGCNCSRSGNYLYNSTTGGLLVIICRNNNTITGIMGTNTNWTTMWRIYRNCSGCENATLDRKETGTLGGVANKNCSLPHKNESNKWTCAPRQREGKTDSLYIAGGKKFWTREKAQYSCENNIGELDGMLHQQILLQKYQVIKVRAYTYGVIEMPENYAKTRIINRRKRELSHTRKKRGVGLVIMLVIMAIVAAAGASLGVANAIQQSYTKAAVQTLANATAAQQDALEATYAMVQHVAKGVRILEARVARVEAITDRIMLYQELDCWHYHQYCVTSTRADVAKYINWTRFKDNCTWQQWERELQGYDGNLTMLLRESARQTQLAEEQVRRIPDVWESLKEVFDWSGWFSWLKYIPIIVVGLVGCILIRAVICVCQPLVQIYRTLSTPTYQRVTVIMEKRADVAGENQDFGDGLEESDDSKTDQKVTVQKAWSRAWELWQNSPWKEPWKRSLLKLLILPLTMGIWINGRLGEHLKNKKERVDCETWGKGD.

A signal peptide spans 1 to 80 (MDAGASYMRL…LLWTNMCVRA (80 aa)). Residues Asn51, Asn98, Asn131, Asn176, Asn228, Asn331, Asn348, Asn354, Asn370, Asn379, Asn400, Asn404, Asn435, Asn441, Asn447, Asn457, Asn467, Asn481, Asn493, Asn503, Asn509, Asn527, and Asn534 are each glycosylated (N-linked (GlcNAc...) asparagine; by host). Over 81-799 (EDYITLISDP…SLKEVFDWSG (719 aa)) the chain is Extracellular. Residues 631–651 (GVGLVIMLVIMAIVAAAGASL) are fusion peptide. Coiled-coil stretches lie at residues 663–713 (KAAV…RIML) and 754–789 (RELQ…DVWE). Positions 697–713 (LEARVARVEAITDRIML) are immunosuppression. A helical membrane pass occupies residues 800 to 820 (WFSWLKYIPIIVVGLVGCILI). Residues 821-942 (RAVICVCQPL…VDCETWGKGD (122 aa)) lie on the Cytoplasmic side of the membrane.

In terms of assembly, the mature envelope protein (Env) consists of a trimer of SU-TM heterodimers attached by noncovalent interactions or by a labile interchain disulfide bond. Specific enzymatic cleavages in vivo yield mature proteins. Envelope glycoproteins are synthesized as an inactive precursor that is N-glycosylated and processed likely by host cell furin or by a furin-like protease in the Golgi to yield the mature SU and TM proteins. The cleavage site between SU and TM requires the minimal sequence [KR]-X-[KR]-R.

The protein resides in the virion membrane. The protein localises to the host cell membrane. Its function is as follows. The surface protein (SU) attaches the virus to the host cell by binding to its receptor. This interaction triggers the refolding of the transmembrane protein (TM) and is thought to activate its fusogenic potential by unmasking its fusion peptide. Fusion occurs at the host cell plasma membrane. Functionally, the transmembrane protein (TM) acts as a class I viral fusion protein. Under the current model, the protein has at least 3 conformational states: pre-fusion native state, pre-hairpin intermediate state, and post-fusion hairpin state. During viral and target cell membrane fusion, the coiled coil regions (heptad repeats) assume a trimer-of-hairpins structure, positioning the fusion peptide in close proximity to the C-terminal region of the ectodomain. The formation of this structure appears to drive apposition and subsequent fusion of viral and target cell membranes. Membranes fusion leads to delivery of the nucleocapsid into the cytoplasm. The chain is Envelope glycoprotein (env) from Caprine arthritis encephalitis virus (strain 63) (CAEV-63).